The following is a 295-amino-acid chain: Fructose-bisphosphate aldolase class 1 (295 aa).

The active-site Proton acceptor is E176. The Schiff-base intermediate with dihydroxyacetone-P role is filled by K213.

Belongs to the class I fructose-bisphosphate aldolase family.

The enzyme catalyses beta-D-fructose 1,6-bisphosphate = D-glyceraldehyde 3-phosphate + dihydroxyacetone phosphate. It participates in carbohydrate degradation; glycolysis; D-glyceraldehyde 3-phosphate and glycerone phosphate from D-glucose: step 4/4. This chain is Fructose-bisphosphate aldolase class 1, found in Treponema denticola (strain ATCC 35405 / DSM 14222 / CIP 103919 / JCM 8153 / KCTC 15104).